A 101-amino-acid chain; its full sequence is Protein Tat (101 aa).

An interaction with human CREBBP region spans residues 1 to 24; it reads MEPVDPSLDPWNHPGSQPTTPCTK. A transactivation region spans residues 1–48; sequence MEPVDPSLDPWNHPGSQPTTPCTKCYCKRCCFHCQWCFTTKGLGISYG. Cys-22, Cys-25, and Cys-27 together coordinate Zn(2+). The cysteine-rich stretch occupies residues 22–37; that stretch reads CTKCYCKRCCFHCQWC. Lys-28 is subject to N6-acetyllysine; by host PCAF. Residues Cys-30, His-33, Cys-34, and Cys-37 each coordinate Zn(2+). The interval 38 to 48 is core; it reads FTTKGLGISYG. A compositionally biased stretch (basic residues) spans 48–58; it reads GRKKRRQRHRT. Positions 48-101 are disordered; it reads GRKKRRQRHRTPQSSQVHQNSLPKQPLSQARGDPTGPKESKKEVESKAKTDPCA. A Nuclear localization signal, RNA-binding (TAR), and protein transduction motif is present at residues 49 to 57; it reads RKKRRQRHR. An interaction with the host capping enzyme RNGTT region spans residues 49–86; the sequence is RKKRRQRHRTPQSSQVHQNSLPKQPLSQARGDPTGPKE. 2 positions are modified to N6-acetyllysine; by host EP300 and GCN5L2: Lys-50 and Lys-51. Residues Arg-52 and Arg-53 each carry the asymmetric dimethylarginine; by host PRMT6 modification. The segment covering 59–75 has biased composition (polar residues); the sequence is PQSSQVHQNSLPKQPLS. Lys-71 is covalently cross-linked (Glycyl lysine isopeptide (Lys-Gly) (interchain with G-Cter in ubiquitin)). The Cell attachment site motif lies at 78 to 80; the sequence is RGD. A compositionally biased stretch (basic and acidic residues) spans 83–101; it reads GPKESKKEVESKAKTDPCA.

The protein belongs to the lentiviruses Tat family. Interacts with host CCNT1. Associates with the P-TEFb complex composed at least of Tat, P-TEFb (CDK9 and CCNT1), TAR RNA, RNA Pol II. Recruits the HATs CREBBP, TAF1/TFIID, EP300, PCAF and GCN5L2. Interacts with host KAT5/Tip60; this interaction targets the latter to degradation. Interacts with the host deacetylase SIRT1. Interacts with host capping enzyme RNGTT; this interaction stimulates RNGTT. Binds to host KDR, and to the host integrins ITGAV/ITGB3 and ITGA5/ITGB1. Interacts with host KPNB1/importin beta-1 without previous binding to KPNA1/importin alpha-1. Interacts with EIF2AK2. Interacts with host nucleosome assembly protein NAP1L1; this interaction may be required for the transport of Tat within the nucleus, since the two proteins interact at the nuclear rim. Interacts with host C1QBP/SF2P32; this interaction involves lysine-acetylated Tat. Interacts with the host chemokine receptors CCR2, CCR3 and CXCR4. Interacts with host DPP4/CD26; this interaction may trigger an anti-proliferative effect. Interacts with host LDLR. Interacts with the host extracellular matrix metalloproteinase MMP1. Interacts with host PRMT6; this interaction mediates Tat's methylation. Interacts with, and is ubiquitinated by MDM2/Hdm2. Interacts with host PSMC3 and HTATIP2. Interacts with STAB1; this interaction may overcome SATB1-mediated repression of IL2 and IL2RA (interleukin) in T cells by binding to the same domain than HDAC1. Interacts (when acetylated) with human CDK13, thereby increasing HIV-1 mRNA splicing and promoting the production of the doubly spliced HIV-1 protein Nef. Interacts with host TBP; this interaction modulates the activity of transcriptional pre-initiation complex. Interacts with host RELA. Interacts with host PLSCR1; this interaction negatively regulates Tat transactivation activity by altering its subcellular distribution. In terms of processing, asymmetrical arginine methylation by host PRMT6 seems to diminish the transactivation capacity of Tat and affects the interaction with host CCNT1. Post-translationally, acetylation by EP300, CREBBP, GCN5L2/GCN5 and PCAF regulates the transactivation activity of Tat. EP300-mediated acetylation of Lys-50 promotes dissociation of Tat from the TAR RNA through the competitive binding to PCAF's bromodomain. In addition, the non-acetylated Tat's N-terminus can also interact with PCAF. PCAF-mediated acetylation of Lys-28 enhances Tat's binding to CCNT1. Lys-50 is deacetylated by SIRT1. Polyubiquitination by host MDM2 does not target Tat to degradation, but activates its transactivation function and fosters interaction with CCNT1 and TAR RNA. In terms of processing, phosphorylated by EIF2AK2 on serine and threonine residues adjacent to the basic region important for TAR RNA binding and function. Phosphorylation of Tat by EIF2AK2 is dependent on the prior activation of EIF2AK2 by dsRNA.

The protein resides in the host nucleus. It localises to the host nucleolus. It is found in the host cytoplasm. Its subcellular location is the secreted. Its function is as follows. Transcriptional activator that increases RNA Pol II processivity, thereby increasing the level of full-length viral transcripts. Recognizes a hairpin structure at the 5'-LTR of the nascent viral mRNAs referred to as the transactivation responsive RNA element (TAR) and recruits the cyclin T1-CDK9 complex (P-TEFb complex) that will in turn hyperphosphorylate the RNA polymerase II to allow efficient elongation. The CDK9 component of P-TEFb and other Tat-activated kinases hyperphosphorylate the C-terminus of RNA Pol II that becomes stabilized and much more processive. Other factors such as HTATSF1/Tat-SF1, SUPT5H/SPT5, and HTATIP2 are also important for Tat's function. Besides its effect on RNA Pol II processivity, Tat induces chromatin remodeling of proviral genes by recruiting the histone acetyltransferases (HATs) CREBBP, EP300 and PCAF to the chromatin. This also contributes to the increase in proviral transcription rate, especially when the provirus integrates in transcriptionally silent region of the host genome. To ensure maximal activation of the LTR, Tat mediates nuclear translocation of NF-kappa-B by interacting with host RELA. Through its interaction with host TBP, Tat may also modulate transcription initiation. Tat can reactivate a latently infected cell by penetrating in it and transactivating its LTR promoter. In the cytoplasm, Tat is thought to act as a translational activator of HIV-1 mRNAs. Extracellular circulating Tat can be endocytosed by surrounding uninfected cells via the binding to several surface receptors such as CD26, CXCR4, heparan sulfate proteoglycans (HSPG) or LDLR. Neurons are rarely infected, but they internalize Tat via their LDLR. Through its interaction with nuclear HATs, Tat is potentially able to control the acetylation-dependent cellular gene expression. Modulates the expression of many cellular genes involved in cell survival, proliferation or in coding for cytokines or cytokine receptors. Tat plays a role in T-cell and neurons apoptosis. Tat induced neurotoxicity and apoptosis probably contribute to neuroAIDS. Circulating Tat also acts as a chemokine-like and/or growth factor-like molecule that binds to specific receptors on the surface of the cells, affecting many cellular pathways. In the vascular system, Tat binds to ITGAV/ITGB3 and ITGA5/ITGB1 integrins dimers at the surface of endothelial cells and competes with bFGF for heparin-binding sites, leading to an excess of soluble bFGF. The chain is Protein Tat from Human immunodeficiency virus type 1 group M subtype F1 (isolate VI850) (HIV-1).